Reading from the N-terminus, the 533-residue chain is 1-aminocyclopropane-1-carboxylate synthase 5 (533 aa).

Lys358 carries the post-translational modification N6-(pyridoxal phosphate)lysine.

Belongs to the class-I pyridoxal-phosphate-dependent aminotransferase family. Pyridoxal 5'-phosphate is required as a cofactor. Expressed in shoots and leaf blades. Expressed at low levels in leaf sheaths. Expressed in vasculature of roots and shoots.

The enzyme catalyses S-adenosyl-L-methionine = 1-aminocyclopropane-1-carboxylate + S-methyl-5'-thioadenosine + H(+). Its pathway is alkene biosynthesis; ethylene biosynthesis via S-adenosyl-L-methionine; ethylene from S-adenosyl-L-methionine: step 1/2. Functionally, catalyzes the formation of 1-aminocyclopropane-1-carboxylate, a direct precursor of ethylene in higher plants. In Oryza sativa subsp. japonica (Rice), this protein is 1-aminocyclopropane-1-carboxylate synthase 5.